A 343-amino-acid chain; its full sequence is Holliday junction branch migration complex subunit RuvB (343 aa).

Residues M1–Y178 form a large ATPase domain (RuvB-L) region. Residues L17, R18, G59, K62, T63, T64, E125 to Y127, R168, Y178, and R215 each bind ATP. T63 serves as a coordination point for Mg(2+). Residues T179 to E249 form a small ATPAse domain (RuvB-S) region. The segment at K252–S343 is head domain (RuvB-H). 2 residues coordinate DNA: R307 and R312.

This sequence belongs to the RuvB family. Homohexamer. Forms an RuvA(8)-RuvB(12)-Holliday junction (HJ) complex. HJ DNA is sandwiched between 2 RuvA tetramers; dsDNA enters through RuvA and exits via RuvB. An RuvB hexamer assembles on each DNA strand where it exits the tetramer. Each RuvB hexamer is contacted by two RuvA subunits (via domain III) on 2 adjacent RuvB subunits; this complex drives branch migration. In the full resolvosome a probable DNA-RuvA(4)-RuvB(12)-RuvC(2) complex forms which resolves the HJ.

The protein localises to the cytoplasm. It carries out the reaction ATP + H2O = ADP + phosphate + H(+). Functionally, the RuvA-RuvB-RuvC complex processes Holliday junction (HJ) DNA during genetic recombination and DNA repair, while the RuvA-RuvB complex plays an important role in the rescue of blocked DNA replication forks via replication fork reversal (RFR). RuvA specifically binds to HJ cruciform DNA, conferring on it an open structure. The RuvB hexamer acts as an ATP-dependent pump, pulling dsDNA into and through the RuvAB complex. RuvB forms 2 homohexamers on either side of HJ DNA bound by 1 or 2 RuvA tetramers; 4 subunits per hexamer contact DNA at a time. Coordinated motions by a converter formed by DNA-disengaged RuvB subunits stimulates ATP hydrolysis and nucleotide exchange. Immobilization of the converter enables RuvB to convert the ATP-contained energy into a lever motion, pulling 2 nucleotides of DNA out of the RuvA tetramer per ATP hydrolyzed, thus driving DNA branch migration. The RuvB motors rotate together with the DNA substrate, which together with the progressing nucleotide cycle form the mechanistic basis for DNA recombination by continuous HJ branch migration. Branch migration allows RuvC to scan DNA until it finds its consensus sequence, where it cleaves and resolves cruciform DNA. This is Holliday junction branch migration complex subunit RuvB from Pseudothermotoga lettingae (strain ATCC BAA-301 / DSM 14385 / NBRC 107922 / TMO) (Thermotoga lettingae).